The sequence spans 343 residues: Mitotic checkpoint protein bub-3 (343 aa).

WD repeat units lie at residues 21–62, 67–105, 107–146, 150–187, 192–232, 249–288, and 291–331; these read PPFV…DISE, THGK…GTQL, SHAL…NGAI, NVSS…EPLQ, PLKY…EMMK, ELIH…RIIQ, and KFET…NSIT. The tract at residues 322-343 is disordered; that stretch reads PSPLPNNSITIRHITDPESRPK. A compositionally biased stretch (basic and acidic residues) spans 334–343; sequence HITDPESRPK.

It belongs to the WD repeat BUB3 family. As to quaternary structure, may interact with bub-1; for localization at the kinetochore and the onset of anaphase.

It is found in the chromosome. Its subcellular location is the centromere. The protein resides in the kinetochore. It localises to the nucleus. In terms of biological role, has a dual function in spindle-assembly checkpoint signaling and in promoting the establishment of correct kinetochore-microtubule (K-MT) attachments. Promotes the formation of stable end-on bipolar attachments of chromosomes. Necessary for expression and kinetochore localization of bub-1. Plays a role in synapsis checkpoint signaling inducing apoptosis in response to unsynapsed chromosomes and thus controlling chromosomal segregation during oocyte meiosis. This chain is Mitotic checkpoint protein bub-3, found in Caenorhabditis elegans.